Here is a 411-residue protein sequence, read N- to C-terminus: 2,3-bisphosphoglycerate-independent phosphoglycerate mutase (411 aa).

It belongs to the BPG-independent phosphoglycerate mutase family. A-PGAM subfamily.

It carries out the reaction (2R)-2-phosphoglycerate = (2R)-3-phosphoglycerate. Its pathway is carbohydrate degradation; glycolysis; pyruvate from D-glyceraldehyde 3-phosphate: step 3/5. In terms of biological role, catalyzes the interconversion of 2-phosphoglycerate and 3-phosphoglycerate. In Thermococcus kodakarensis (strain ATCC BAA-918 / JCM 12380 / KOD1) (Pyrococcus kodakaraensis (strain KOD1)), this protein is 2,3-bisphosphoglycerate-independent phosphoglycerate mutase.